Reading from the N-terminus, the 437-residue chain is Lipid II isoglutaminyl synthase (glutamine-hydrolyzing) subunit MurT (437 aa).

Zn(2+) contacts are provided by C202, C205, C224, and C226. The active site involves D349.

It belongs to the MurCDEF family. MurT subfamily. In terms of assembly, forms a heterodimer with GatD.

It catalyses the reaction beta-D-GlcNAc-(1-&gt;4)-Mur2Ac(oyl-L-Ala-gamma-D-Glu-L-Lys-D-Ala-D-Ala)-di-trans,octa-cis-undecaprenyl diphosphate + L-glutamine + ATP + H2O = beta-D-GlcNAc-(1-&gt;4)-Mur2Ac(oyl-L-Ala-D-isoglutaminyl-L-Lys-D-Ala-D-Ala)-di-trans,octa-cis-undecaprenyl diphosphate + L-glutamate + ADP + phosphate + H(+). The enzyme catalyses beta-D-GlcNAc-(1-&gt;4)-Mur2Ac(oyl-L-Ala-gamma-D-Glu-L-Lys-D-Ala-D-Ala)-di-trans,octa-cis-undecaprenyl diphosphate + ATP = beta-D-GlcNAc-(1-&gt;4)-Mur2Ac(oyl-L-Ala-gamma-D-O-P-Glu-L-Lys-D-Ala-D-Ala)-di-trans,octa-cis-undecaprenyl diphosphate + ADP. It carries out the reaction beta-D-GlcNAc-(1-&gt;4)-Mur2Ac(oyl-L-Ala-gamma-D-O-P-Glu-L-Lys-D-Ala-D-Ala)-di-trans,octa-cis-undecaprenyl diphosphate + NH4(+) = beta-D-GlcNAc-(1-&gt;4)-Mur2Ac(oyl-L-Ala-D-isoglutaminyl-L-Lys-D-Ala-D-Ala)-di-trans,octa-cis-undecaprenyl diphosphate + phosphate + H(+). It functions in the pathway cell wall biogenesis; peptidoglycan biosynthesis. In terms of biological role, the lipid II isoglutaminyl synthase complex catalyzes the formation of alpha-D-isoglutamine in the cell wall lipid II stem peptide. The MurT subunit catalyzes the ATP-dependent amidation of D-glutamate residue of lipid II, converting it to an isoglutamine residue. The protein is Lipid II isoglutaminyl synthase (glutamine-hydrolyzing) subunit MurT of Staphylococcus aureus (strain COL).